Here is a 1048-residue protein sequence, read N- to C-terminus: MDPVVKKPSPGGVQHRVTKGLRAIVGHACRHPIHTLLVTALTAATTHLHVLEGTYQAAHRGLAPWAKETPLNVQSFLCGSRTVTLGEASAWRWQIDDRPKVSEDGQSDFHWALVTLDLPGASVDASIPFLSNTLSEFLGAEQITPTPDSSPSPDHSALTFRVPYSQLDGFLQAVEIIPSEKEDDSWRLRSPREEGSPTSLGHWVGSSWLSFLHRVKHAETVDLVIIGLSYLAMNMTVVSLFRVMRQLGSRFWLATSVLLSGAFAFVLGLGITTTCDVPVDMLLLFEGIPYLVLTVGFEKPIQLTRAVLCVSEELRGGWQRPVPNGASSDDSRQSQLIPNIIQLAVDREGWYIVRSYLLEIGALALGAVLRPNDSLGHFCFLAAWTLLIDAILLFTFYATILCVKLEITRIRSPGGLGQVNAKHPSGIFGHKVKSTNITWWKLLTVGGFVLCHFLQLSPFFYRVMGEYMANGTLPPTAVSPFKEAANGLNEIYLTARVEGFETRVTVLPPLQYALESAGFNISATKRSTFDGVLDGLESPLGRLCLMGALVVSLVLNNHLIHAARWHAWPQARESAVPDGSSLSVPCSATAPEVCTRPPEETEALLKSNQAESLTDDELVELCLRGKIAGYSLEKTLERIAAGSSCSVTRLDAFTRAVRIRRAAVSKTPSTQNLCSGLAESLLPYRDYNYELVHGACCENVVGYLPLPLGVAGPMVIDGQALFIPMATTEGVLVASASRGCKAINAGGGATTMLKGDGMTRGPCLRFPSAQRAAEAQRWVESPLGHEVLAAAFNATSRFARLQTLTVAQAGIYLYIRFRTTTGDAMGMNMISKGVEKALEAMAAEGGFPDMHTVTLSGNFCSDKKSAAINWIGGRGKSVIAEATIPAETVRQVLKTDVDALVELNTAKNLVGSAMAGSLGGFNAHASNLVQAVFLATGQDPAQNVESSSCITTMKNIDGNLHIAVSMPSMEVGTIGGGTILEAQGAMLDLLGVRGAHATEPGANARRLARIVAAAVLAGELSTCAALAAGHLVNAHMQHNRSAGATVKK.

The Cytoplasmic segment spans residues 1–32; it reads MDPVVKKPSPGGVQHRVTKGLRAIVGHACRHP. A helical transmembrane segment spans residues 33 to 53; sequence IHTLLVTALTAATTHLHVLEG. Topologically, residues 54–220 are lumenal; it reads TYQAAHRGLA…FLHRVKHAET (167 aa). A helical membrane pass occupies residues 221-241; it reads VDLVIIGLSYLAMNMTVVSLF. Residues 222–403 enclose the SSD domain; the sequence is DLVIIGLSYL…FTFYATILCV (182 aa). At 242 to 250 the chain is on the cytoplasmic side; that stretch reads RVMRQLGSR. A helical membrane pass occupies residues 251–271; sequence FWLATSVLLSGAFAFVLGLGI. Over 272 to 276 the chain is Lumenal; sequence TTTCD. The helical transmembrane segment at 277 to 297 threads the bilayer; it reads VPVDMLLLFEGIPYLVLTVGF. Topologically, residues 298–348 are cytoplasmic; that stretch reads EKPIQLTRAVLCVSEELRGGWQRPVPNGASSDDSRQSQLIPNIIQLAVDRE. A helical membrane pass occupies residues 349–369; sequence GWYIVRSYLLEIGALALGAVL. The Lumenal portion of the chain corresponds to 370 to 377; it reads RPNDSLGH. An N-linked (GlcNAc...) asparagine glycan is attached at Asn-372. The chain crosses the membrane as a helical span at residues 378-398; that stretch reads FCFLAAWTLLIDAILLFTFYA. Residues 399–439 lie on the Cytoplasmic side of the membrane; that stretch reads TILCVKLEITRIRSPGGLGQVNAKHPSGIFGHKVKSTNITW. Residues 440–460 traverse the membrane as a helical segment; that stretch reads WKLLTVGGFVLCHFLQLSPFF. Topologically, residues 461-542 are lumenal; sequence YRVMGEYMAN…LDGLESPLGR (82 aa). 2 N-linked (GlcNAc...) asparagine glycosylation sites follow: Asn-470 and Asn-520. The helical transmembrane segment at 543 to 563 threads the bilayer; it reads LCLMGALVVSLVLNNHLIHAA. At 564 to 1048 the chain is on the cytoplasmic side; the sequence is RWHAWPQARE…NRSAGATVKK (485 aa). Residue Glu-729 is the Charge relay system of the active site. A CoA-binding site is contributed by 735–741; the sequence is SASRGCK. NADP(+)-binding positions include 796–798 and 823–831; these read SRF and DAMGMNMIS. Lys-863 serves as the catalytic Charge relay system. 892–894 is a binding site for CoA; that stretch reads VLK. Catalysis depends on Asp-939, which acts as the Charge relay system. CoA is bound at residue 1034–1035; it reads AH. His-1035 functions as the Proton donor in the catalytic mechanism. Position 1039–1040 (1039–1040) interacts with NADP(+); it reads NR.

The protein belongs to the HMG-CoA reductase family.

The protein localises to the endoplasmic reticulum membrane. The catalysed reaction is (R)-mevalonate + 2 NADP(+) + CoA = (3S)-3-hydroxy-3-methylglutaryl-CoA + 2 NADPH + 2 H(+). The protein operates within metabolic intermediate biosynthesis; (R)-mevalonate biosynthesis; (R)-mevalonate from acetyl-CoA: step 3/3. HMG-CoA reductase; part of the first module of ergosterol biosynthesis pathway that includes the early steps of the pathway, conserved across all eukaryotes, and which results in the formation of mevalonate from acetyl-coenzyme A (acetyl-CoA). In this module, the cytosolic acetyl-CoA acetyltransferase catalyzes the formation of acetoacetyl-CoA. The hydroxymethylglutaryl-CoA synthase then condenses acetyl-CoA with acetoacetyl-CoA to form HMG-CoA. The rate-limiting step of the early module is the reduction to mevalonate by the 3-hydroxy-3-methylglutaryl-coenzyme A (HMG-CoA) reductase. In Aspergillus terreus (strain NIH 2624 / FGSC A1156), this protein is 3-hydroxy-3-methylglutaryl-coenzyme A reductase.